The following is a 249-amino-acid chain: Probable septum site-determining protein MinC (249 aa).

The segment at 116-149 (AAVSPPPPPPPPPARAEPAAPVARPAPGRMQRNA) is disordered. Over residues 119–130 (SPPPPPPPPPAR) the composition is skewed to pro residues. The span at 131–142 (AEPAAPVARPAP) shows a compositional bias: low complexity.

The protein belongs to the MinC family. Interacts with MinD and FtsZ.

Its function is as follows. Cell division inhibitor that blocks the formation of polar Z ring septums. Rapidly oscillates between the poles of the cell to destabilize FtsZ filaments that have formed before they mature into polar Z rings. Prevents FtsZ polymerization. The protein is Probable septum site-determining protein MinC of Xanthomonas campestris pv. campestris (strain ATCC 33913 / DSM 3586 / NCPPB 528 / LMG 568 / P 25).